The following is a 100-amino-acid chain: Large ribosomal subunit protein bL28 (100 aa).

The protein belongs to the bacterial ribosomal protein bL28 family.

The polypeptide is Large ribosomal subunit protein bL28 (Methylobacterium radiotolerans (strain ATCC 27329 / DSM 1819 / JCM 2831 / NBRC 15690 / NCIMB 10815 / 0-1)).